Here is a 370-residue protein sequence, read N- to C-terminus: 3-dehydroquinate synthase (370 aa).

Residues 107-111, 131-132, Lys144, and Lys153 contribute to the NAD(+) site; these read GVIGD and TS. Positions 186, 249, and 267 each coordinate Zn(2+).

This sequence belongs to the sugar phosphate cyclases superfamily. Dehydroquinate synthase family. Requires Co(2+) as cofactor. Zn(2+) is required as a cofactor. The cofactor is NAD(+).

The protein resides in the cytoplasm. The enzyme catalyses 7-phospho-2-dehydro-3-deoxy-D-arabino-heptonate = 3-dehydroquinate + phosphate. The protein operates within metabolic intermediate biosynthesis; chorismate biosynthesis; chorismate from D-erythrose 4-phosphate and phosphoenolpyruvate: step 2/7. Catalyzes the conversion of 3-deoxy-D-arabino-heptulosonate 7-phosphate (DAHP) to dehydroquinate (DHQ). The polypeptide is 3-dehydroquinate synthase (Ruegeria pomeroyi (strain ATCC 700808 / DSM 15171 / DSS-3) (Silicibacter pomeroyi)).